Here is a 695-residue protein sequence, read N- to C-terminus: Calcium-dependent serine proteinase (695 aa).

Positions 1–21 (MGKSSEAWCIVLFSVFASFSA) are cleaved as a signal peptide. The region spanning 22 to 136 (EPTMHGEILS…TGFAAYYAAI (115 aa)) is the CUB 1 domain. Disulfide bonds link C71/C89, C141/C153, C149/C162, and C164/C177. The EGF-like; calcium-binding domain maps to 137-178 (DVNECTDFTDVPCSHFCNNFIGGYFCSCPPEYFLHDDMRNCG). N155 is subject to (3R)-3-hydroxyasparagine. N180 is a glycosylation site (N-linked (GlcNAc...) asparagine). 6 disulfides stabilise this stretch: C181-C208, C240-C257, C300-C347, C327-C360, C365-C410, and C392-C428. The 116-residue stretch at 181 to 296 (CSGNVFTALI…KGWKLRYHGD (116 aa)) folds into the CUB 2 domain. 2 consecutive Sushi domains span residues 298–362 (IPCP…RCQP) and 363–430 (VDCG…KCVP). N413 carries N-linked (GlcNAc...) asparagine glycosylation. The Peptidase S1 domain occupies 445–687 (IFGGFPAKIQ…YKDWILQTMQ (243 aa)). Residues H482 and D536 each act as charge relay system in the active site. Disulfide bonds link C602-C625 and C634-C666. The active-site Charge relay system is S638.

Belongs to the peptidase S1 family. In terms of assembly, heterodimer, consisting of heavy and light chains with disulfide bonds. The heavy chain is expected to be a regulatory subunit and the light chain contains the catalytic site. In terms of processing, the iron and 2-oxoglutarate dependent 3-hydroxylation of aspartate and asparagine is (R) stereospecific within EGF domains.

The protein resides in the secreted. Its subcellular location is the extracellular space. The protein localises to the extracellular matrix. Functionally, capable of degrading extracellular matrix proteins. CASP degrades type I and IV collagen and fibronectin in the presence of calcium. The chain is Calcium-dependent serine proteinase from Mesocricetus auratus (Golden hamster).